We begin with the raw amino-acid sequence, 358 residues long: Isopentenyl-diphosphate delta-isomerase (358 aa).

12–13 contributes to the substrate binding site; that stretch reads RK. Residues 69-71, S99, and N128 contribute to the FMN site; that span reads AMT. Q158 provides a ligand contact to substrate. E159 provides a ligand contact to Mg(2+). Residues K190, T220, 267–269, and 288–289 contribute to the FMN site; these read GIR and AG.

Belongs to the IPP isomerase type 2 family. Homooctamer. Dimer of tetramers. FMN serves as cofactor. The cofactor is NADPH. Requires Mg(2+) as cofactor.

It is found in the cytoplasm. The catalysed reaction is isopentenyl diphosphate = dimethylallyl diphosphate. Involved in the biosynthesis of isoprenoids. Catalyzes the 1,3-allylic rearrangement of the homoallylic substrate isopentenyl (IPP) to its allylic isomer, dimethylallyl diphosphate (DMAPP). The sequence is that of Isopentenyl-diphosphate delta-isomerase from Listeria welshimeri serovar 6b (strain ATCC 35897 / DSM 20650 / CCUG 15529 / CIP 8149 / NCTC 11857 / SLCC 5334 / V8).